The primary structure comprises 1851 residues: Protein lap4 (1851 aa).

LRR repeat units lie at residues 38-59, 61-82, 84-105, 107-128, 130-152, 153-174, 176-197, 199-220, 222-243, 245-267, 268-289, 291-312, 314-335, 337-358, 360-382, and 383-403; these read TLEE…FFRL, RLRK…IQNF, NLVE…IKHL, SLQV…FSQL, NLTV…GSLT, QLES…ISQL, KLKR…LGYL, GLHE…LGLL, KLTY…ISGL, SLTD…AKLS, RLTI…LGNC, NMQE…IGQM, KLNN…IGQC, NLGV…LGNC, VLHV…VNLQ, and LKAV…QPDT. Disordered regions lie at residues 427–474, 584–641, and 656–719; these read PARD…KDLK, VGGS…VQHL, and SQER…PDNL. 2 positions are modified to phosphoserine: serine 433 and serine 435. The span at 438-461 shows a compositional bias: basic and acidic residues; that stretch reads FEEREPSRTVVKFSEEATQEKETP. Residues 471–492 adopt a coiled-coil conformation; sequence KDLKAKAQKLKVERSRNEEHAN. Over residues 589–601 the composition is skewed to acidic residues; that stretch reads EVQDDDEQEDEFE. A compositionally biased stretch (basic residues) spans 620–639; that stretch reads RPPKLHRRDTPHHLKNKRVQ. Residues 656–672 show a composition bias toward polar residues; sequence SQERNDTTPQHSLSGKV. Acidic residues predominate over residues 676-686; that stretch reads IEEEEQLEVEQ. Residues 677-693 adopt a coiled-coil conformation; that stretch reads EEEEQLEVEQEQQQQQQ. Phosphoserine occurs at positions 700, 702, and 705. A PDZ 1 domain is found at 731–818; that stretch reads EIHIERTAAG…VLVLVVQREV (88 aa). A phosphoserine mark is found at serine 834 and serine 837. Positions 929-1019 constitute a PDZ 2 domain; that stretch reads HTTLIRDQIG…FVRLVLQREY (91 aa). Phosphoserine occurs at positions 1031 and 1041. Positions 1067–1150 are disordered; sequence LATTTPTPKP…EAQPSSLRPL (84 aa). Composition is skewed to polar residues over residues 1080-1097 and 1132-1149; these read ASIS…TNGF and GSTT…SLRP. 2 consecutive PDZ domains span residues 1239 to 1329 and 1336 to 1428; these read EVVL…QHDP and EVLL…CKGY. Positions 1448 to 1467 are enriched in polar residues; it reads NSSASCSGGSRQGSRASETG. A disordered region spans residues 1448–1485; sequence NSSASCSGGSRQGSRASETGSELSQSQSVSSLDHEEDE. A compositionally biased stretch (low complexity) spans 1468-1478; the sequence is SELSQSQSVSS. Residues serine 1475, serine 1477, and serine 1478 each carry the phosphoserine modification. Threonine 1599 is modified (phosphothreonine). Low complexity predominate over residues 1647–1669; the sequence is AESANSAGAPSPAVPASTPGSAP. Disordered regions lie at residues 1647 to 1751 and 1772 to 1851; these read AESA…KVFS and LRRD…VFRS. The span at 1725 to 1751 shows a compositional bias: basic and acidic residues; the sequence is VSDKKRFFESAMEDQHKPTQKTDKVFS. Residues 1753–1790 adopt a coiled-coil conformation; the sequence is LSKDEVEKLRQEEERKIATLRRDKNSRLLDAANDNIDK. Positions 1807-1816 are enriched in acidic residues; it reads DDNDDSDQEE. The span at 1831–1851 shows a compositional bias: basic and acidic residues; that stretch reads HFDDAEDMRNPLDEIEAVFRS.

Belongs to the LAP (LRR and PDZ) protein family. During germ band extension, expression of isoform A occurs predominantly in neuroblasts derived from the neuro-ectoderm and later is restricted to CNS neurons and pole cells. Isoform C is strongly expressed in PNS and a subset of CNS neurons. In the adult, expressed in third antennal segment and maxillary palps, major olfactory organs and in Johnstons organ in the second antennal segment. Expression is also observed in cortical regions of the brain. Isoforms expressed in epithelia are coexpressed with dlg1 throughout development.

The protein resides in the cytoplasm. Its subcellular location is the apicolateral cell membrane. It is found in the cell junction. The protein localises to the septate junction. In terms of biological role, required for polarization of the embryonic, imaginal disk and follicular epithelia. Specifically restricts apical membrane determinants to the apical cell surface; acts to exclude crb from the basolateral domain and define adherens junction position. Regulates cellular growth and differentiation; acts as a tumor suppressor. Essential for odor guided behavior. The chain is Protein lap4 from Drosophila melanogaster (Fruit fly).